The chain runs to 354 residues: UDP-3-O-acylglucosamine N-acyltransferase (354 aa).

Histidine 250 acts as the Proton acceptor in catalysis.

Belongs to the transferase hexapeptide repeat family. LpxD subfamily. Homotrimer.

The catalysed reaction is a UDP-3-O-[(3R)-3-hydroxyacyl]-alpha-D-glucosamine + a (3R)-hydroxyacyl-[ACP] = a UDP-2-N,3-O-bis[(3R)-3-hydroxyacyl]-alpha-D-glucosamine + holo-[ACP] + H(+). Its pathway is bacterial outer membrane biogenesis; LPS lipid A biosynthesis. Functionally, catalyzes the N-acylation of UDP-3-O-acylglucosamine using 3-hydroxyacyl-ACP as the acyl donor. Is involved in the biosynthesis of lipid A, a phosphorylated glycolipid that anchors the lipopolysaccharide to the outer membrane of the cell. The sequence is that of UDP-3-O-acylglucosamine N-acyltransferase from Methylococcus capsulatus (strain ATCC 33009 / NCIMB 11132 / Bath).